The following is a 189-amino-acid chain: Ornithine decarboxylase antizyme 2 (189 aa).

Ser186 is subject to Phosphoserine.

This sequence belongs to the ODC antizyme family. Interacts with ODC1 and thereby sterically blocks ODC homodimerization. Interacts with AZIN2; this interaction disrupts the interaction between the antizyme and ODC1.

Its subcellular location is the nucleus. Its function is as follows. Ornithine decarboxylase (ODC) antizyme protein that negatively regulates ODC activity and intracellular polyamine biosynthesis and uptake in response to increased intracellular polyamine levels. Binds to ODC monomers, inhibiting the assembly of the functional ODC homodimers. Does not target the ODC monomers for degradation, which allows a protein synthesis-independent restoration of ODC activity. Involved in the translocation of AZIN2 from ER-Golgi intermediate compartment (ERGIC) to the cytosol. The protein is Ornithine decarboxylase antizyme 2 (OAZ2) of Homo sapiens (Human).